The chain runs to 41 residues: Large ribosomal subunit protein bL36 (41 aa).

The protein belongs to the bacterial ribosomal protein bL36 family.

This chain is Large ribosomal subunit protein bL36, found in Opitutus terrae (strain DSM 11246 / JCM 15787 / PB90-1).